The chain runs to 341 residues: Methionine import ATP-binding protein MetN 2 (341 aa).

Positions 2 to 241 constitute an ABC transporter domain; the sequence is IELKEVVKEY…PQHTVTKRFV (240 aa). 38-45 is a binding site for ATP; it reads GFSGAGKS.

It belongs to the ABC transporter superfamily. Methionine importer (TC 3.A.1.24) family. In terms of assembly, the complex is composed of two ATP-binding proteins (MetN), two transmembrane proteins (MetI) and a solute-binding protein (MetQ).

The protein resides in the cell membrane. The enzyme catalyses L-methionine(out) + ATP + H2O = L-methionine(in) + ADP + phosphate + H(+). It catalyses the reaction D-methionine(out) + ATP + H2O = D-methionine(in) + ADP + phosphate + H(+). Functionally, part of the ABC transporter complex MetNIQ involved in methionine import. Responsible for energy coupling to the transport system. In Staphylococcus aureus (strain USA300), this protein is Methionine import ATP-binding protein MetN 2.